A 150-amino-acid chain; its full sequence is Putative TBC1 domain family member 29 (150 aa).

The Rab-GAP TBC; truncated domain occupies 1–43 (MGHLDKEGLCTQGSSFSWLLRVLNDGISLGLTPCLWDMYLLEG). Polar residues predominate over residues 102-111 (ESSRGPSLLQ). The disordered stretch occupies residues 102–125 (ESSRGPSLLQTPPRVPGQQALSRG).

This is Putative TBC1 domain family member 29 from Homo sapiens (Human).